Here is a 171-residue protein sequence, read N- to C-terminus: Probable DNA-directed RNA polymerase subunit delta (171 aa).

The HTH HARE-type domain occupies 14–81 (MALVEIAYEI…SDQTWGLRSW (68 aa)). The interval 138-171 (EFDEIDEADDDELDDLEDEILDDDEDFDEEEDEE) is disordered.

It belongs to the RpoE family. In terms of assembly, RNAP is composed of a core of 2 alpha, a beta and a beta' subunits. The core is associated with a delta subunit and one of several sigma factors.

Participates in both the initiation and recycling phases of transcription. In the presence of the delta subunit, RNAP displays an increased specificity of transcription, a decreased affinity for nucleic acids, and an increased efficiency of RNA synthesis because of enhanced recycling. The polypeptide is Probable DNA-directed RNA polymerase subunit delta (Bacillus licheniformis (strain ATCC 14580 / DSM 13 / JCM 2505 / CCUG 7422 / NBRC 12200 / NCIMB 9375 / NCTC 10341 / NRRL NRS-1264 / Gibson 46)).